Here is a 471-residue protein sequence, read N- to C-terminus: UDP-N-acetylmuramate--L-alanine ligase (471 aa).

114–120 serves as a coordination point for ATP; that stretch reads GTHGKTT.

It belongs to the MurCDEF family.

The protein resides in the cytoplasm. The enzyme catalyses UDP-N-acetyl-alpha-D-muramate + L-alanine + ATP = UDP-N-acetyl-alpha-D-muramoyl-L-alanine + ADP + phosphate + H(+). The protein operates within cell wall biogenesis; peptidoglycan biosynthesis. In terms of biological role, cell wall formation. The sequence is that of UDP-N-acetylmuramate--L-alanine ligase from Methylobacterium nodulans (strain LMG 21967 / CNCM I-2342 / ORS 2060).